The primary structure comprises 151 residues: Cyanate hydratase (151 aa).

Residues arginine 92, glutamate 95, and serine 118 contribute to the active site.

It belongs to the cyanase family.

The catalysed reaction is cyanate + hydrogencarbonate + 3 H(+) = NH4(+) + 2 CO2. Its function is as follows. Catalyzes the reaction of cyanate with bicarbonate to produce ammonia and carbon dioxide. In Coprinopsis cinerea (strain Okayama-7 / 130 / ATCC MYA-4618 / FGSC 9003) (Inky cap fungus), this protein is Cyanate hydratase.